We begin with the raw amino-acid sequence, 241 residues long: Enterotoxin type H (241 aa).

Residues 1-24 (MINKIKILFSFLALLLSFTSYAKA) form the signal peptide. Cysteine 106 and cysteine 116 form a disulfide bridge. The Zn(2+) site is built by aspartate 191, histidine 230, and aspartate 232.

This sequence belongs to the staphylococcal/streptococcal toxin family. In terms of assembly, interacts with host MHC class II molecules composed of alpha/HLA-DRA and beta/HLA-DRB1 chains. Interacts with host TCR alpha-chain TRAV27. Zn(2+) is required as a cofactor.

The protein localises to the secreted. Its function is as follows. Staphylococcal enterotoxin that activates the host immune system by binding as unprocessed molecules to major histocompatibility (MHC) complex class II and T-cell receptor (TCR) molecules via their alpha domain, in particular TRAV27. In turn, this ternary complex activates a large number of T-lymphocytes initiating a systemic release of pro-inflammatory cytokines. Also causes the intoxication staphylococcal food poisoning syndrome. The illness characterized by high fever, hypotension, diarrhea, shock, and in some cases death. The sequence is that of Enterotoxin type H (entH) from Staphylococcus aureus.